A 152-amino-acid chain; its full sequence is Ribosome maturation factor RimP (152 aa).

It belongs to the RimP family.

It localises to the cytoplasm. Required for maturation of 30S ribosomal subunits. This Alteromonas mediterranea (strain DSM 17117 / CIP 110805 / LMG 28347 / Deep ecotype) protein is Ribosome maturation factor RimP.